The sequence spans 265 residues: MDLQTFRKQIEKKLQRDGWTIRYDHKESTLRIEDKATKKGATLALKPLLAKWEREEYAAVDEALRTVAVGLESMAKAVHLNGNEKNIFPVIRAASFPDKTKDGKTLVYQKHTAETRIYYAVDLGETYTLITDELLNESGWELKALAEMATFNVRSLPQPFKEDEVAGNRFYFLSANDGYDASRILDQSLVQRMEQKAVGQLVAAIPHQDALIFADIENDTGYDVLGQMALQFFGGGRIPVTALPFIVENGQLEPVFIMAQKKPKG.

This sequence belongs to the UPF0354 family.

The chain is UPF0354 protein ABC2771 from Shouchella clausii (strain KSM-K16) (Alkalihalobacillus clausii).